Here is a 690-residue protein sequence, read N- to C-terminus: Glycine--tRNA ligase beta subunit (690 aa).

This sequence belongs to the class-II aminoacyl-tRNA synthetase family. In terms of assembly, tetramer of two alpha and two beta subunits.

The protein localises to the cytoplasm. It carries out the reaction tRNA(Gly) + glycine + ATP = glycyl-tRNA(Gly) + AMP + diphosphate. This is Glycine--tRNA ligase beta subunit from Pediococcus pentosaceus (strain ATCC 25745 / CCUG 21536 / LMG 10740 / 183-1w).